The following is a 124-amino-acid chain: Putative iron-sulfur cluster insertion protein ErpA (124 aa).

The iron-sulfur cluster site is built by cysteine 52, cysteine 116, and cysteine 118.

This sequence belongs to the HesB/IscA family. As to quaternary structure, homodimer. The cofactor is iron-sulfur cluster.

Functionally, required for insertion of 4Fe-4S clusters. This Ralstonia pickettii (strain 12J) protein is Putative iron-sulfur cluster insertion protein ErpA.